A 148-amino-acid polypeptide reads, in one-letter code: MASIDRFQVMQEPELKILEHWFENEDTRRRMDGMLLLDEWYARVNKDKHDTVIMAYDGQLPAGMVVIEFGEERTYIGLIVNPLYRLKGYGKQILQKLMTEPDFTSVREWVACIEEDNRISLACFQAAGFTLEDTEPDEDGFLTLILRN.

The N-acetyltransferase domain maps to 8–148 (QVMQEPELKI…DGFLTLILRN (141 aa)).

It belongs to the acetyltransferase family.

This is an uncharacterized protein from Bacillus subtilis (strain 168).